A 104-amino-acid polypeptide reads, in one-letter code: Phosphoribosyl-ATP pyrophosphatase (104 aa).

Belongs to the PRA-PH family.

The protein localises to the cytoplasm. The catalysed reaction is 1-(5-phospho-beta-D-ribosyl)-ATP + H2O = 1-(5-phospho-beta-D-ribosyl)-5'-AMP + diphosphate + H(+). It functions in the pathway amino-acid biosynthesis; L-histidine biosynthesis; L-histidine from 5-phospho-alpha-D-ribose 1-diphosphate: step 2/9. This Methanoregula boonei (strain DSM 21154 / JCM 14090 / 6A8) protein is Phosphoribosyl-ATP pyrophosphatase.